A 303-amino-acid polypeptide reads, in one-letter code: Recombination-associated protein RdgC (303 aa).

This sequence belongs to the RdgC family.

Its subcellular location is the cytoplasm. It is found in the nucleoid. May be involved in recombination. This Shewanella frigidimarina (strain NCIMB 400) protein is Recombination-associated protein RdgC.